The chain runs to 149 residues: SsrA-binding protein (149 aa).

The protein belongs to the SmpB family.

It localises to the cytoplasm. In terms of biological role, required for rescue of stalled ribosomes mediated by trans-translation. Binds to transfer-messenger RNA (tmRNA), required for stable association of tmRNA with ribosomes. tmRNA and SmpB together mimic tRNA shape, replacing the anticodon stem-loop with SmpB. tmRNA is encoded by the ssrA gene; the 2 termini fold to resemble tRNA(Ala) and it encodes a 'tag peptide', a short internal open reading frame. During trans-translation Ala-aminoacylated tmRNA acts like a tRNA, entering the A-site of stalled ribosomes, displacing the stalled mRNA. The ribosome then switches to translate the ORF on the tmRNA; the nascent peptide is terminated with the 'tag peptide' encoded by the tmRNA and targeted for degradation. The ribosome is freed to recommence translation, which seems to be the essential function of trans-translation. In Thermosipho africanus (strain TCF52B), this protein is SsrA-binding protein.